The following is a 681-amino-acid chain: Serine/threonine-protein kinase PAK 6 (681 aa).

Disordered regions lie at residues 1–30 (MFRK…DPKE), 149–169 (GGTP…PRVL), 200–256 (QSSP…ESSL), and 268–355 (TAAT…PRTW). The CRIB domain occupies 12–25 (ISAPQNFQHRVHTS). Residues 26–406 (FDPKEGKFVG…VVDQGDPRLL (381 aa)) are linker. Low complexity-rich tracts occupy residues 201–212 (SSPPGASPPTGT) and 268–278 (TAATAPPSSSK). Residues 308 to 333 (SLPSDQPVGTFSPLTTSDTSSPQKSL) show a composition bias toward polar residues. Residues 407–658 (LDSYVKIGEG…AQELLDHPFL (252 aa)) enclose the Protein kinase domain. Residues 413–421 (IGEGSTGIV) and lysine 436 each bind ATP. The active-site Proton acceptor is the aspartate 526. Residue serine 560 is modified to Phosphoserine; by autocatalysis.

The protein belongs to the protein kinase superfamily. STE Ser/Thr protein kinase family. STE20 subfamily. In terms of assembly, interacts tightly with GTP-bound but not GDP-bound CDC42/p21 and RAC1. Interacts with the androgen receptor AR and the estrogen receptor ESR1. Interacts with IQGAP1 and PPM1B. In terms of processing, autophosphorylated. Phosphorylated by MAP2K6//MAPKK6, leading to PAK6 activation. As to expression, selectively expressed in brain and testis, with lower levels in multiple tissues including prostate and breast.

Its subcellular location is the cytoplasm. It is found in the nucleus. The catalysed reaction is L-seryl-[protein] + ATP = O-phospho-L-seryl-[protein] + ADP + H(+). It catalyses the reaction L-threonyl-[protein] + ATP = O-phospho-L-threonyl-[protein] + ADP + H(+). In terms of biological role, serine/threonine protein kinase that plays a role in the regulation of gene transcription. The kinase activity is induced by various effectors including AR or MAP2K6/MAPKK6. Phosphorylates the DNA-binding domain of androgen receptor/AR and thereby inhibits AR-mediated transcription. Also inhibits ESR1-mediated transcription. May play a role in cytoskeleton regulation by interacting with IQGAP1. May protect cells from apoptosis through phosphorylation of BAD. The protein is Serine/threonine-protein kinase PAK 6 (PAK6) of Homo sapiens (Human).